Consider the following 396-residue polypeptide: ATP-dependent RNA helicase eIF4A (396 aa).

Positions 22 to 50 match the Q motif motif; the sequence is YSFDDLKLKEELLRGIFGYGFVEPSAIQQ. One can recognise a Helicase ATP-binding domain in the interval 53–223; sequence ILPIIEGKDV…SKFMKDPVRI (171 aa). An ATP-binding site is contributed by 66–73; sequence AQSGTGKT. The DEAD box motif lies at 171 to 174; sequence DEAD. The Helicase C-terminal domain maps to 234–395; the sequence is GIGQYYVNVE…ELPSSISELF (162 aa).

This sequence belongs to the DEAD box helicase family. eIF4A subfamily. Component of the eIF4F complex, which composition varies with external and internal environmental conditions. It is composed of at least eIF4A, eIF4E and eIF4G.

It is found in the cytoplasm. It carries out the reaction ATP + H2O = ADP + phosphate + H(+). Its function is as follows. ATP-dependent RNA helicase which is a subunit of the eIF4F complex involved in cap recognition and is required for mRNA binding to ribosome. In the current model of translation initiation, eIF4A unwinds RNA secondary structures in the 5'-UTR of mRNAs which is necessary to allow efficient binding of the small ribosomal subunit, and subsequent scanning for the initiator codon. The chain is ATP-dependent RNA helicase eIF4A (TIF1) from Kluyveromyces lactis (strain ATCC 8585 / CBS 2359 / DSM 70799 / NBRC 1267 / NRRL Y-1140 / WM37) (Yeast).